Consider the following 575-residue polypeptide: Alpha-(1,6)-fucosyltransferase (575 aa).

Residues 1 to 9 are Cytoplasmic-facing; it reads MRPWTGSWR. Residues 10-30 form a helical; Signal-anchor for type II membrane protein membrane-spanning segment; that stretch reads WIMLILFAWGTLLFYIGGHLV. At 31 to 575 the chain is on the lumenal side; the sequence is RDNDHPDHSS…KVPHVPEAEK (545 aa). Intrachain disulfides connect C204–C266, C212–C230, and C218–C222. Residues 206–493 form the GT23 domain; the sequence is KAKKLVCNIN…PDASANFHSL (288 aa). Position 278 is a phosphoserine (S278). Residues 299 to 305 carry the SH3-binding motif; it reads PRPPYLP. The important for donor substrate binding stretch occupies residues 365–366; it reads RR. An intrachain disulfide couples C465 to C472. An SH3 domain is found at 502-563; the sequence is QNAHNQIAIY…PSYKVREKIE (62 aa).

Belongs to the glycosyltransferase 23 family. In terms of processing, tyrosine phosphorylated by PKDCC/VLK. In terms of tissue distribution, highest expression found in brain. Also found in heart, lung, spleen and kidney.

It is found in the golgi apparatus. Its subcellular location is the golgi stack membrane. The catalysed reaction is N(4)-{beta-D-GlcNAc-(1-&gt;2)-alpha-D-Man-(1-&gt;3)-[beta-D-GlcNAc-(1-&gt;2)-alpha-D-Man-(1-&gt;6)]-beta-D-Man-(1-&gt;4)-beta-D-GlcNAc-(1-&gt;4)-beta-D-GlcNAc}-L-asparaginyl-[protein] + GDP-beta-L-fucose = an N(4)-{beta-D-GlcNAc-(1-&gt;2)-alpha-D-Man-(1-&gt;3)-[beta-D-GlcNAc-(1-&gt;2)-alpha-D-Man-(1-&gt;6)]-beta-D-Man-(1-&gt;4)-beta-D-GlcNAc-(1-&gt;4)-[alpha-L-Fuc-(1-&gt;6)]-beta-D-GlcNAc}-L-asparaginyl-[protein] + GDP + H(+). It functions in the pathway protein modification; protein glycosylation. In terms of biological role, catalyzes the addition of fucose in alpha 1-6 linkage to the first GlcNAc residue, next to the peptide chains in N-glycans. The chain is Alpha-(1,6)-fucosyltransferase (FUT8) from Bos taurus (Bovine).